Here is a 432-residue protein sequence, read N- to C-terminus: Ribosomal protein uS12 methylthiotransferase RimO (432 aa).

The 114-residue stretch at 2-115 folds into the MTTase N-terminal domain; the sequence is IRVAVITLGC…LPEIINRVLK (114 aa). Positions 11, 47, 78, 151, 155, and 158 each coordinate [4Fe-4S] cluster. A Radical SAM core domain is found at 137–367; sequence EDGKPFAYLK…MLHQQSITRA (231 aa).

The protein belongs to the methylthiotransferase family. RimO subfamily. The cofactor is [4Fe-4S] cluster.

The protein resides in the cytoplasm. The catalysed reaction is L-aspartate(89)-[ribosomal protein uS12]-hydrogen + (sulfur carrier)-SH + AH2 + 2 S-adenosyl-L-methionine = 3-methylsulfanyl-L-aspartate(89)-[ribosomal protein uS12]-hydrogen + (sulfur carrier)-H + 5'-deoxyadenosine + L-methionine + A + S-adenosyl-L-homocysteine + 2 H(+). In terms of biological role, catalyzes the methylthiolation of an aspartic acid residue of ribosomal protein uS12. This is Ribosomal protein uS12 methylthiotransferase RimO from Moorella thermoacetica (strain ATCC 39073 / JCM 9320).